The sequence spans 297 residues: Protease HtpX homolog (297 aa).

2 consecutive transmembrane segments (helical) span residues I5–I25 and L43–G63. A Zn(2+)-binding site is contributed by H154. The active site involves E155. H158 is a Zn(2+) binding site. The next 2 helical transmembrane spans lie at L169–A189 and F203–A223. E229 is a Zn(2+) binding site.

It belongs to the peptidase M48B family. The cofactor is Zn(2+).

It localises to the cell membrane. The sequence is that of Protease HtpX homolog from Bacillus velezensis (strain DSM 23117 / BGSC 10A6 / LMG 26770 / FZB42) (Bacillus amyloliquefaciens subsp. plantarum).